A 154-amino-acid polypeptide reads, in one-letter code: Urease accessory protein UreE (154 aa).

Residues 135 to 154 are disordered; that stretch reads PENGAYHGTGGHHHHHHDHE. Basic residues predominate over residues 144–154; the sequence is GGHHHHHHDHE.

It belongs to the UreE family.

The protein resides in the cytoplasm. In terms of biological role, involved in urease metallocenter assembly. Binds nickel. Probably functions as a nickel donor during metallocenter assembly. The chain is Urease accessory protein UreE from Teredinibacter turnerae (strain ATCC 39867 / T7901).